Here is a 360-residue protein sequence, read N- to C-terminus: Phosphoserine aminotransferase (360 aa).

Arg42 contributes to the L-glutamate binding site. Pyridoxal 5'-phosphate is bound by residues Trp102, Thr152, Asp171, and Gln194. Residue Lys195 is modified to N6-(pyridoxal phosphate)lysine. 237-238 provides a ligand contact to pyridoxal 5'-phosphate; sequence NT.

This sequence belongs to the class-V pyridoxal-phosphate-dependent aminotransferase family. SerC subfamily. Homodimer. The cofactor is pyridoxal 5'-phosphate.

The protein resides in the cytoplasm. It catalyses the reaction O-phospho-L-serine + 2-oxoglutarate = 3-phosphooxypyruvate + L-glutamate. The catalysed reaction is 4-(phosphooxy)-L-threonine + 2-oxoglutarate = (R)-3-hydroxy-2-oxo-4-phosphooxybutanoate + L-glutamate. Its pathway is amino-acid biosynthesis; L-serine biosynthesis; L-serine from 3-phospho-D-glycerate: step 2/3. It participates in cofactor biosynthesis; pyridoxine 5'-phosphate biosynthesis; pyridoxine 5'-phosphate from D-erythrose 4-phosphate: step 3/5. Catalyzes the reversible conversion of 3-phosphohydroxypyruvate to phosphoserine and of 3-hydroxy-2-oxo-4-phosphonooxybutanoate to phosphohydroxythreonine. This is Phosphoserine aminotransferase from Coxiella burnetii (strain RSA 331 / Henzerling II).